Reading from the N-terminus, the 146-residue chain is Hemoglobin subunit beta (146 aa).

Position 1 is an N-acetylvaline (Val1). The Globin domain maps to 2 to 146; the sequence is HLTAEEKDAV…VANALAHRYH (145 aa). Position 44 is a phosphoserine (Ser44). Lys59 bears the N6-acetyllysine mark. A heme b-binding site is contributed by His63. Lys82 carries the post-translational modification N6-acetyllysine. His92 provides a ligand contact to heme b. Residue Cys93 is modified to S-nitrosocysteine.

This sequence belongs to the globin family. Heterotetramer of two alpha chains and two beta chains. As to expression, red blood cells.

Involved in oxygen transport from the lung to the various peripheral tissues. The polypeptide is Hemoglobin subunit beta (HBB) (Hippopotamus amphibius (Hippopotamus)).